Consider the following 195-residue polypeptide: HTH-type transcriptional regulator BetI (195 aa).

In terms of domain architecture, HTH tetR-type spans 8 to 68 (SIRRRQLIDA…ATMRDITSQL (61 aa)). The H-T-H motif DNA-binding region spans 31–50 (TIAQIARRAGVSTGIISHYF).

The protein operates within amine and polyamine biosynthesis; betaine biosynthesis via choline pathway [regulation]. In terms of biological role, repressor involved in the biosynthesis of the osmoprotectant glycine betaine. It represses transcription of the choline transporter BetT and the genes of BetAB involved in the synthesis of glycine betaine. This chain is HTH-type transcriptional regulator BetI, found in Escherichia coli O127:H6 (strain E2348/69 / EPEC).